A 394-amino-acid chain; its full sequence is Phosphoglycerate kinase (394 aa).

Residues 21-23 (DFN), Arg-36, 59-62 (HLGR), Arg-118, and Arg-151 contribute to the substrate site. At Ser-183 the chain carries Phosphoserine. Residues Lys-201 and Gly-292 each coordinate ATP. A Phosphothreonine modification is found at Thr-299. ATP is bound by residues Glu-323 and 350–353 (GGDS).

It belongs to the phosphoglycerate kinase family. As to quaternary structure, monomer.

The protein localises to the cytoplasm. It catalyses the reaction (2R)-3-phosphoglycerate + ATP = (2R)-3-phospho-glyceroyl phosphate + ADP. It functions in the pathway carbohydrate degradation; glycolysis; pyruvate from D-glyceraldehyde 3-phosphate: step 2/5. The polypeptide is Phosphoglycerate kinase (Bacillus anthracis (strain A0248)).